A 245-amino-acid chain; its full sequence is tRNA (guanine-N(1)-)-methyltransferase (245 aa).

S-adenosyl-L-methionine is bound by residues Gly-111 and 131 to 136; that span reads MGDYVL.

Belongs to the RNA methyltransferase TrmD family. Homodimer.

The protein localises to the cytoplasm. It carries out the reaction guanosine(37) in tRNA + S-adenosyl-L-methionine = N(1)-methylguanosine(37) in tRNA + S-adenosyl-L-homocysteine + H(+). Specifically methylates guanosine-37 in various tRNAs. The chain is tRNA (guanine-N(1)-)-methyltransferase from Staphylococcus aureus (strain USA300).